Reading from the N-terminus, the 395-residue chain is Dual specificity mitogen-activated protein kinase kinase 1 (395 aa).

A disordered region spans residues 1–24 (MPKKKPTPIQLNPNPEGTAVNGTP). The span at 9–24 (IQLNPNPEGTAVNGTP) shows a compositional bias: polar residues. The Protein kinase domain maps to 68-363 (FEKVSELGAG…LKQLMVHSFI (296 aa)). ATP is bound by residues 74–82 (LGAGNGGVV) and Lys97. The active-site Proton acceptor is Asp190. A phosphoserine; by RAF mark is found at Ser218 and Ser222. Residues 284 to 305 (ASSELAPRPRPPGRPISSYGPD) form a disordered region.

The protein belongs to the protein kinase superfamily. STE Ser/Thr protein kinase family. MAP kinase kinase subfamily. Post-translationally, activated by phosphorylation on Ser/Thr catalyzed by MAP kinase kinase kinases (RAF or MOS). As to expression, expressed in the central nervous system, kidney, liver, intestine and the hematopoietic system.

The protein localises to the cytoplasm. The protein resides in the cytoskeleton. Its subcellular location is the microtubule organizing center. It localises to the centrosome. It is found in the spindle pole body. The protein localises to the nucleus. The catalysed reaction is L-seryl-[protein] + ATP = O-phospho-L-seryl-[protein] + ADP + H(+). It carries out the reaction L-threonyl-[protein] + ATP = O-phospho-L-threonyl-[protein] + ADP + H(+). It catalyses the reaction L-tyrosyl-[protein] + ATP = O-phospho-L-tyrosyl-[protein] + ADP + H(+). Dual specificity protein kinase which acts as an essential component of the MAP kinase signal transduction pathway. Binding of extracellular ligands such as growth factors, cytokines and hormones to their cell-surface receptors activates the MAPK/ERK cascade, ultimately leading to phosphorylation of a threonine and a tyrosine residue in a Thr-Glu-Tyr sequence located in MAP kinases. Depending on the cellular context, this pathway mediates diverse biological functions such as cell growth, adhesion, survival and differentiation predominantly through the regulation of transcription, metabolism and cytoskeletal rearrangements. The polypeptide is Dual specificity mitogen-activated protein kinase kinase 1 (map2k1) (Xenopus laevis (African clawed frog)).